The following is a 500-amino-acid chain: Lysine--tRNA ligase (500 aa).

Positions 411 and 418 each coordinate Mg(2+).

The protein belongs to the class-II aminoacyl-tRNA synthetase family. In terms of assembly, homodimer. It depends on Mg(2+) as a cofactor.

Its subcellular location is the cytoplasm. It catalyses the reaction tRNA(Lys) + L-lysine + ATP = L-lysyl-tRNA(Lys) + AMP + diphosphate. This Actinobacillus pleuropneumoniae serotype 5b (strain L20) protein is Lysine--tRNA ligase.